Consider the following 951-residue polypeptide: Pheromone-regulated membrane protein 10 (951 aa).

Polar residues-rich tracts occupy residues 1 to 10 (MSSSYGNNGD), 68 to 84 (GGSTDELNRANRTNVGS), and 92 to 104 (RTASNTESGNRRQ). Disordered stretches follow at residues 1 to 293 (MSSS…EDPI), 313 to 366 (AGKS…TMVS), and 433 to 487 (NDSS…LPNF). The segment covering 126–135 (DDDDEEEEEH) has biased composition (acidic residues). The segment covering 219-234 (PHQETNDGRNSAESHS) has biased composition (basic and acidic residues). Composition is skewed to polar residues over residues 318 to 332 (PGTQHGASGSASSEH), 354 to 366 (PFNQSTDGETMVS), and 468 to 484 (SQTNVSGANKSGSSMNL). 10 consecutive transmembrane segments (helical) span residues 635-655 (WVSVLLYAFCSSMVTPFAFGG), 657-677 (WINMAVAFGIGLCVGSLQFIV), 687-707 (VFEVTASIVVSFCGRALGSIP), 711-731 (ICFGATVQGSLALILPGYIIL), 753-773 (IIYSLFLGFGITLGAALFGWI), 786-806 (NISPWFRFIFVPCFSIGLGLI), 811-831 (WTQLPVMTLISCCGYVVTYFS), 841-861 (FTSAMAAFVIGILGNLYSRIW), 863-883 (GFAVSAMLPAIFVQVPSGVAS), and 918-938 (VTMIQVSIGISVGLFASTLFI).

Belongs to the ThrE exporter (TC 2.A.79) family.

Its subcellular location is the membrane. This Kluyveromyces lactis (strain ATCC 8585 / CBS 2359 / DSM 70799 / NBRC 1267 / NRRL Y-1140 / WM37) (Yeast) protein is Pheromone-regulated membrane protein 10.